The sequence spans 874 residues: Tyrosine-protein kinase receptor TYRO3 (874 aa).

Positions 1–20 (MEVSLCILLFLLHFNEGIHG) are cleaved as a signal peptide. Ig-like C2-type domains lie at 21-106 (VRFT…IISS) and 117-198 (PHFG…GTVH). Residues 21–411 (VRFTQKPFHQ…QAQTQRGHMW (391 aa)) lie on the Extracellular side of the membrane. Cysteine 42 and cysteine 95 are joined by a disulfide. N-linked (GlcNAc...) asparagine glycosylation is found at asparagine 135, asparagine 174, asparagine 217, asparagine 270, asparagine 305, and asparagine 373. Cysteine 138 and cysteine 181 are disulfide-bonded. Fibronectin type-III domains lie at 202–297 (RPDS…TPQA) and 299–403 (PSAA…AMQA). Residues 412 to 432 (VGLLFGLLVATMVGLLLIVLI) form a helical membrane-spanning segment. At 433-874 (RNRGKETQFG…EEEEDVIINV (442 aa)) the chain is on the cytoplasmic side. The 272-residue stretch at 497-768 (LTLGRMLGKG…QHLIDQLELL (272 aa)) folds into the Protein kinase domain. ATP-binding positions include 503 to 511 (LGKGEFGSV) and lysine 529. Residue aspartate 634 is the Proton acceptor of the active site. Phosphotyrosine; by autocatalysis is present on tyrosine 665.

Belongs to the protein kinase superfamily. Tyr protein kinase family. AXL/UFO subfamily.

It localises to the cell membrane. It carries out the reaction L-tyrosyl-[protein] + ATP = O-phospho-L-tyrosyl-[protein] + ADP + H(+). In terms of biological role, may be involved in cell adhesion processes, particularly in the central nervous system. The polypeptide is Tyrosine-protein kinase receptor TYRO3 (tyro3) (Danio rerio (Zebrafish)).